The chain runs to 382 residues: Bifunctional enzyme IspD/IspF (382 aa).

The 2-C-methyl-D-erythritol 4-phosphate cytidylyltransferase stretch occupies residues 1 to 225; sequence MTFSVVIVAA…EHLAGVARVT (225 aa). The interval 226-382 is 2-C-methyl-D-erythritol 2,4-cyclodiphosphate synthase; that stretch reads RVGQGFDAHR…SAVVAVETPA (157 aa). Asp232 and His234 together coordinate a divalent metal cation. 4-CDP-2-C-methyl-D-erythritol 2-phosphate is bound by residues 232-234 and 258-259; these read DAH and HS. Residue His266 participates in a divalent metal cation binding. 4-CDP-2-C-methyl-D-erythritol 2-phosphate is bound by residues 280–282, 356–359, Phe363, and Arg366; these read DIG and TTTE.

The protein in the N-terminal section; belongs to the IspD/TarI cytidylyltransferase family. IspD subfamily. It in the C-terminal section; belongs to the IspF family. A divalent metal cation is required as a cofactor.

It carries out the reaction 2-C-methyl-D-erythritol 4-phosphate + CTP + H(+) = 4-CDP-2-C-methyl-D-erythritol + diphosphate. The enzyme catalyses 4-CDP-2-C-methyl-D-erythritol 2-phosphate = 2-C-methyl-D-erythritol 2,4-cyclic diphosphate + CMP. It participates in isoprenoid biosynthesis; isopentenyl diphosphate biosynthesis via DXP pathway; isopentenyl diphosphate from 1-deoxy-D-xylulose 5-phosphate: step 2/6. It functions in the pathway isoprenoid biosynthesis; isopentenyl diphosphate biosynthesis via DXP pathway; isopentenyl diphosphate from 1-deoxy-D-xylulose 5-phosphate: step 4/6. Bifunctional enzyme that catalyzes the formation of 4-diphosphocytidyl-2-C-methyl-D-erythritol from CTP and 2-C-methyl-D-erythritol 4-phosphate (MEP) (IspD), and catalyzes the conversion of 4-diphosphocytidyl-2-C-methyl-D-erythritol 2-phosphate (CDP-ME2P) to 2-C-methyl-D-erythritol 2,4-cyclodiphosphate (ME-CPP) with a corresponding release of cytidine 5-monophosphate (CMP) (IspF). This chain is Bifunctional enzyme IspD/IspF, found in Caulobacter vibrioides (strain ATCC 19089 / CIP 103742 / CB 15) (Caulobacter crescentus).